A 291-amino-acid polypeptide reads, in one-letter code: 3-hydroxy-5-phosphonooxypentane-2,4-dione thiolase (291 aa).

The Schiff-base intermediate with substrate role is filled by lysine 203.

This sequence belongs to the DeoC/FbaB aldolase family. Homodecamer.

Its subcellular location is the cytoplasm. It catalyses the reaction dihydroxyacetone phosphate + acetyl-CoA = 3-hydroxy-2,4-dioxopentyl phosphate + CoA. In terms of biological role, involved in the degradation of phospho-AI-2, thereby terminating induction of the lsr operon and closing the AI-2 signaling cycle. Catalyzes the transfer of an acetyl moiety from 3-hydroxy-5-phosphonooxypentane-2,4-dione to CoA to form glycerone phosphate and acetyl-CoA. The protein is 3-hydroxy-5-phosphonooxypentane-2,4-dione thiolase of Escherichia coli O139:H28 (strain E24377A / ETEC).